The primary structure comprises 59 residues: Ribosome biogenesis protein Nop10 (59 aa).

This sequence belongs to the NOP10 family.

Functionally, involved in ribosome biogenesis; more specifically in 18S rRNA pseudouridylation and in cleavage of pre-rRNA. The protein is Ribosome biogenesis protein Nop10 of Thermococcus kodakarensis (strain ATCC BAA-918 / JCM 12380 / KOD1) (Pyrococcus kodakaraensis (strain KOD1)).